A 1101-amino-acid chain; its full sequence is ATP-citrate synthase (1101 aa).

One can recognise an ATP-grasp domain in the interval 4–265 (KAISEQTGKE…LDAKSGASLK (262 aa)). Positions 58, 66, 67, 109, 111, and 118 each coordinate ATP. Y131 carries the phosphotyrosine modification. D216 is an ATP binding site. Mg(2+)-binding residues include D257, S260, and A262. S263 carries the phosphoserine modification. Citrate-binding residues include G309, N346, T348, Y364, and R379. The segment covering 441–457 (ASGSTSTPAPSRTASFS) has biased composition (low complexity). Positions 441-487 (ASGSTSTPAPSRTASFSESRADEVAPAKKAKPAMPQDSVPSPRSLQG) are disordered. T447 carries the phosphothreonine modification. A Phosphoserine modification is found at S451. S455 carries the phosphoserine; by PKA and PKB/AKT1 or PKB/AKT2 or BCKDK modification. S459 and S481 each carry phosphoserine. Over residues 478–487 (SVPSPRSLQG) the composition is skewed to polar residues. N6-acetyllysine; alternate occurs at positions 540, 546, and 554. Residues K540, K546, and K554 each participate in a glycyl lysine isopeptide (Lys-Gly) (interchain with G-Cter in ubiquitin); alternate cross-link. T639 bears the Phosphothreonine mark. Position 663 is a phosphoserine (S663). Y682 is modified (phosphotyrosine). The active-site Tele-phosphohistidine intermediate is H760. 779 to 789 (LKEAGVFVPRS) is a binding site for CoA. Position 839 is a phosphoserine (S839). K948, K968, K978, and K1077 each carry N6-acetyllysine. The residue at position 1100 (S1100) is a Phosphoserine.

It in the N-terminal section; belongs to the succinate/malate CoA ligase beta subunit family. This sequence in the C-terminal section; belongs to the succinate/malate CoA ligase alpha subunit family. In terms of assembly, homotetramer. Mg(2+) is required as a cofactor. Post-translationally, phosphorylated by PKA and GSK3 in a sequential manner; phosphorylation results in activation of its activity. Phosphorylation on Thr-447 and Ser-451 depends on the phosphorylation state of Ser-455. Phosphorylation on Ser-455 is decreased by prior phosphorylation on the other 2 residues. Phosphorylated at Ser-455 by BCKDK and dephosphorylated by protein phosphatase PPM1K. In terms of processing, ISGylated. Acetylated at Lys-540, Lys-546 and Lys-554 by KAT2B/PCAF. Acetylation is promoted by glucose and stabilizes the protein, probably by preventing ubiquitination at the same sites. Acetylation promotes de novo lipid synthesis. Deacetylated by SIRT2. Post-translationally, ubiquitinated at Lys-540, Lys-546 and Lys-554 by the BCR(KLHL25) E3 ubiquitin ligase complex and UBR4, leading to its degradation. Ubiquitination is probably inhibited by acetylation at same site. BCR(KLHL25)-mediated degradation of ACLY promotes fatty acid oxidation and is required for differentiation of inducible regulatory T (iTreg) cells.

Its subcellular location is the cytoplasm. It is found in the cytosol. The enzyme catalyses oxaloacetate + acetyl-CoA + ADP + phosphate = citrate + ATP + CoA. Its activity is regulated as follows. Phosphorylation results in activation of its activity. Glucose 6-phosphate, fructose 6-phosphate, fructose 2,6-bisphosphate, ribulose 5-phosphate, and fructose 1,6-bisphosphate also act as activators. Its function is as follows. Catalyzes the cleavage of citrate into oxaloacetate and acetyl-CoA, the latter serving as common substrate in multiple biochemical reactions in protein, carbohydrate and lipid metabolism. The chain is ATP-citrate synthase (ACLY) from Homo sapiens (Human).